We begin with the raw amino-acid sequence, 66 residues long: uncharacterized protein (66 aa).

An HTH cro/C1-type domain is found at 5 to 59; it reads VKELRARFGYSQEKLGETVGVTRQTVAAIEKGDYVPSLLLALKICKAFSMKMEDV. Residues 16–35 constitute a DNA-binding region (H-T-H motif); it reads QEKLGETVGVTRQTVAAIEK.

This is an uncharacterized protein from Bacillus subtilis (strain 168).